The following is a 137-amino-acid chain: CUB domain-containing protein (137 aa).

The signal sequence occupies residues 1–21 (MRLSRAFAWPLLCSIATTVKA). Disulfide bonds link Cys30-Cys51 and Cys75-Cys96. The CUB domain maps to 30–132 (CGGHYTDEYG…TFFEIYYFVD (103 aa)).

The chain is CUB domain-containing protein from Homo sapiens (Human).